Consider the following 194-residue polypeptide: Molybdenum cofactor guanylyltransferase (194 aa).

GTP contacts are provided by residues 12–14 (LAG), K25, N53, D70, and D100. Mg(2+) is bound at residue D100.

It belongs to the MobA family. Monomer. Requires Mg(2+) as cofactor.

The protein localises to the cytoplasm. The enzyme catalyses Mo-molybdopterin + GTP + H(+) = Mo-molybdopterin guanine dinucleotide + diphosphate. Its function is as follows. Transfers a GMP moiety from GTP to Mo-molybdopterin (Mo-MPT) cofactor (Moco or molybdenum cofactor) to form Mo-molybdopterin guanine dinucleotide (Mo-MGD) cofactor. The sequence is that of Molybdenum cofactor guanylyltransferase from Aliivibrio fischeri (strain ATCC 700601 / ES114) (Vibrio fischeri).